The primary structure comprises 614 residues: MAQKKYLQAKLTQFLREDRIQLWKPPYTKENKEVGLAVKDLAKKYSERLECCENEVENIIEEIRRKAIERGTGNEHYRTTGIATIEVFLPPRLRKHDKKSLLETRLHVTGRDLRCQIAETFGFQENYIKIVINKKQLQLGKSLEEQGVTHNVKAMVLELKQSEEDVRKNLQLEEEEQNEAELKERRIQRTKRGLEILAERAEMVVDPETMPYLDIANQTGRSLRIPPAERKALMLAMGYHEKGRAFLKRKEYGIALPCLLDADRYFCECKELLDTVDNYAVLQLDIVWCYFRLEQLECLDDAEKKLNLAQKCFKNCYGENHQRLVHIKGNCGKEKVLFLRLYLLQGIQNYHSGNGEEAREYLNKARQLFKELYIDPSKVHNLLQLGFTAQEARLGLRACDGNVDHAATHISNRREELAQIRKEEKEKRRRRLENVNTLRGMGYSTQAAKQALHQARGNLDDALKVLLSNPHMWWLQDADPENNSRQASPSQESINQLVYMGFDTVVAEAALRVFGGNVQLAAQTLAHHGGSLPPDLQFSGEDSSPTPSTSPSDSAGTSSASTDEDMETEAVNEILEDIPEHEEDYLDSTLEDEEVIIAEYLSYVESISSAAKNN.

Coiled coils occupy residues Leu-36–Gly-71 and Asn-151–Asp-206. UBA domains follow at residues Tyr-373–Arg-413, Glu-423–Asn-469, and Ser-488–His-528. Positions Arg-413–Arg-430 match the Nuclear localization signal motif. Residues Glu-426–Trp-473 are NEDD8-binding 1. The interval Ser-531–Leu-590 is disordered. Over residues Ser-539–Ser-561 the composition is skewed to low complexity. The segment at Thr-549–Ile-597 is NEDD8-binding 2. Positions Thr-562–Leu-590 are enriched in acidic residues.

As to quaternary structure, directly interacts with NEDD8 and PSMD4/S5a, a member of the regulatory subunit of the 26S proteasome. Interacts with AIPL1. The interaction with UBD via UBA domains facilitates the linking of UBD-conjugated target protein to the proteasome complex and accelerates UBD degradation and that of its conjugates.

It localises to the nucleus. Its function is as follows. Specific down-regulator of the NEDD8 conjugation system. Recruits NEDD8, UBD, and their conjugates to the proteasome for degradation. The polypeptide is NEDD8 ultimate buster 1 (Nub1) (Mus musculus (Mouse)).